The following is a 401-amino-acid chain: MKKLWQNCHIATMQNGQYSYIEDAAIVTEGHLIHWIGKQQQLPADTYSETVDLNGAWVTPGFIDCHTHSVFGGNRSVEFEKRLQGVSYAEIAASGGGIASTVRATREASEEQLLNSALKRIRCMQQDGVTTIEIKSGYGLNYENERKMLRVIRQIGEKLPMTVKSTCLAAHALPPEYKDQSDAYIEHICTEMLPKLHAEGLVDAVDAFCEHLAFSPAQVERVFKTAQSLNLPVKLHAEQLSSLGGSSLAARYHALSADHLEYMTEDDVKAMAASGTVAVLLPGAFYLLRETQYPPIESLIKHGVRIALSSDLNPGTSPALSLRLMLNMGSTLFRLTPEQALAGVTIHAAQALGLEQTHGSLEQGKVADFVAWDIEHPSEIVYWLGGDLPKRVVQHGQEVIF.

Residues histidine 66 and histidine 68 each coordinate Fe(3+). The Zn(2+) site is built by histidine 66 and histidine 68. Positions 75, 138, and 171 each coordinate 4-imidazolone-5-propanoate. Residue tyrosine 138 participates in N-formimidoyl-L-glutamate binding. Position 236 (histidine 236) interacts with Fe(3+). A Zn(2+)-binding site is contributed by histidine 236. 4-imidazolone-5-propanoate is bound at residue glutamine 239. Residue aspartate 311 participates in Fe(3+) binding. Residue aspartate 311 coordinates Zn(2+). Asparagine 313 and glycine 315 together coordinate N-formimidoyl-L-glutamate. A 4-imidazolone-5-propanoate-binding site is contributed by threonine 316.

This sequence belongs to the metallo-dependent hydrolases superfamily. HutI family. The cofactor is Zn(2+). It depends on Fe(3+) as a cofactor.

It is found in the cytoplasm. It catalyses the reaction 4-imidazolone-5-propanoate + H2O = N-formimidoyl-L-glutamate. The protein operates within amino-acid degradation; L-histidine degradation into L-glutamate; N-formimidoyl-L-glutamate from L-histidine: step 3/3. Catalyzes the hydrolytic cleavage of the carbon-nitrogen bond in imidazolone-5-propanoate to yield N-formimidoyl-L-glutamate. It is the third step in the universal histidine degradation pathway. This chain is Imidazolonepropionase, found in Acinetobacter baumannii (strain ATCC 17978 / DSM 105126 / CIP 53.77 / LMG 1025 / NCDC KC755 / 5377).